A 207-amino-acid polypeptide reads, in one-letter code: uncharacterized protein (207 aa).

This is an uncharacterized protein from Methanocaldococcus jannaschii (strain ATCC 43067 / DSM 2661 / JAL-1 / JCM 10045 / NBRC 100440) (Methanococcus jannaschii).